The sequence spans 508 residues: Light-independent protochlorophyllide reductase subunit B (508 aa).

Asp36 serves as a coordination point for [4Fe-4S] cluster. Catalysis depends on Asp294, which acts as the Proton donor. Gly429–Met430 is a substrate binding site.

This sequence belongs to the ChlB/BchB/BchZ family. As to quaternary structure, protochlorophyllide reductase is composed of three subunits; ChlL, ChlN and ChlB. Forms a heterotetramer of two ChlB and two ChlN subunits. The cofactor is [4Fe-4S] cluster.

It carries out the reaction chlorophyllide a + oxidized 2[4Fe-4S]-[ferredoxin] + 2 ADP + 2 phosphate = protochlorophyllide a + reduced 2[4Fe-4S]-[ferredoxin] + 2 ATP + 2 H2O. The protein operates within porphyrin-containing compound metabolism; chlorophyll biosynthesis (light-independent). Component of the dark-operative protochlorophyllide reductase (DPOR) that uses Mg-ATP and reduced ferredoxin to reduce ring D of protochlorophyllide (Pchlide) to form chlorophyllide a (Chlide). This reaction is light-independent. The NB-protein (ChlN-ChlB) is the catalytic component of the complex. The chain is Light-independent protochlorophyllide reductase subunit B from Crocosphaera subtropica (strain ATCC 51142 / BH68) (Cyanothece sp. (strain ATCC 51142)).